The following is a 133-amino-acid chain: Thioredoxin-like protein CXXS1 (133 aa).

One can recognise a Thioredoxin domain in the interval Met1 to Glu120.

This sequence belongs to the thioredoxin family.

This chain is Thioredoxin-like protein CXXS1, found in Oryza sativa subsp. japonica (Rice).